The sequence spans 244 residues: MNADAEGHSGAVVPAQSPEGSSAADDFVPSALGTREHWDAVYERELRTFQEYGDTGEIWFGEESMNRLIRWMQKHKIPLDASVLDIGTGNGVFLVELVKHGFSNITGIDYSPSAIKLSASILEKEGLSNINLKVEDFLNPSTKLSGFHVCVDKGTYDAISLNPDNAIEKRKQYVMSLSRVLEVKGFFLITSCNWTKAELLDAFSEGFELFEELPTPKFSFGGRSGNTVAALVFQKRGTSLDKIS.

Residues Met1–Phe27 form a disordered region. Phosphoserine is present on Ser21.

This sequence belongs to the class I-like SAM-binding methyltransferase superfamily. EFM4 family.

It is found in the cytoplasm. The protein resides in the nucleus. The enzyme catalyses L-lysyl-[protein] + 3 S-adenosyl-L-methionine = N(6),N(6),N(6)-trimethyl-L-lysyl-[protein] + 3 S-adenosyl-L-homocysteine + 3 H(+). Protein-lysine methyltransferase that selectively catalyzes the trimethylation of EEF1A at 'Lys-318'. The chain is EEF1A lysine methyltransferase 2 from Mus musculus (Mouse).